We begin with the raw amino-acid sequence, 184 residues long: Acyl-homoserine-lactone synthase (184 aa).

The protein belongs to the autoinducer synthase family.

The enzyme catalyses a fatty acyl-[ACP] + S-adenosyl-L-methionine = an N-acyl-L-homoserine lactone + S-methyl-5'-thioadenosine + holo-[ACP] + H(+). In terms of biological role, involved in the synthesis of the acyl-homoserine lactone (AHL) signal N-(3-hydroxydodecanoyl)-L-HSL (3-hydroxy-C(12)-HSL or OH-dDHL). Required for normal biofilm development. This chain is Acyl-homoserine-lactone synthase, found in Acinetobacter baumannii.